The sequence spans 1580 residues: MLTSWAPGLWVLGLWATFSHGTNIGERCPTSQQEGLKLEHSSDPSTNVTGFNLIRRLNLMKTSAIKKIRNPKGPLILRLGAAPVTQPTRRVFPRGLPEEFALVLTVLLKKHTFRNTWYLFQVTDANGYPQISLEVNSQERSLELRAQGQDGDFVSCIFPVPQLFDLRWHKLMLSVAGRVASVHVDCVSASSQPLGPRQSIRPGGHVFLGLDAEQGKPVSFDLQQAHIYCDPELVLEEGCCEILPGGCPPETSKSRRDTQSNELIEINPQTEGKVYTRCFCLEEPQNSKVDAQLMGRNIQKAERGTKVHQGTGVNECPPCAHSARESNVTLGPSGLKGGKGERGLTGPSGPKGEKGARGNDCVRVSPDAPLQCVEGPKGEKGESGDLGPPGLPGPTGQKGQKGEKGDGGLKGLPGKPGRDGRPGEICVIGPKGQKGDPGFVGPEGLAGEPGPPGLPGPPGIGLPGTPGDPGGPPGPKGEKGSSGIPGKEGPGGKPGKPGVPGTKGEKGDPCEVCPTLPEGSQNFVGLPGKPGPKGEPGDPAPAWEGLGTVGLKGDRGDPGIQGMKGEKGEPCSSCSSGVGAQHLGPSPGHGLPGLPGTSGIPGPRGLKGEKGSFGDTGPAGVPGSPGPVGPAGIKGAKGEPCEPCTALSELQDGDMRVVHLPGPAGEKGEPGSPGFGLPGKQGKAGERGLKGQKGDAGNPGDPGTPGITGQPGISGEPGIRGPAGPKGEKGDGCTACPSLQGALTDVSGLPGKPGPKGEPGPEGVGHPGKPGQPGLPGVQGPPGPKGTQGEPGPPGTGAEGPQGEPGTQGLPGTQGLPGPRGPPGSAGEKGAQGSPGPKGAIGPMGPPGAGVSGPPGQKGSRGEKGEPGECSCPSRGEPIFSGMPGAPGLWMGSSSQPGPQGPPGVPGPPGPPGMPGLQGVPGHNGLPGQPGLTAELGSLPIEKHLLKSICGDCAQGQTAHPAFLLEKGEKGDQGIPGVPGFDNCARCFIERERPRAEEARGDNSEGEPGCSGSPGLPGPPGMPGQRGEEGPPGMRGSPGPPGPIGLQGERGLTGLTGDKGEPGPPGQPGYPGAMGPPGLPGIKGERGYTGPSGEKGESGPPGSEGLPGPQGPAGPRGERGPQGSSGEKGDQGFQGQPGFPGPPGPPGFPGKAGAPGPPGPQAEKGSEGIRGPSGLPGSPGPPGPPGIQGPAGLDGLDGKDGKPGLRGDPGPAGPPGLMGPPGFKGKTGHPGLPGPKGDCGKPGPPGSSGRPGAEGEPGAMGPQGRPGPPGHLGPPGQPGPPGLSTVGLKGDRGVPGERGLAGLPGQPGTPGHPGPPGEPGSDGAAGKEGPPGKQGLYGPPGPKGDPGPAGQKGQAGEKGRSGMPGGPGKSGSMGPIGPPGPAGERGHPGSPGPAGNPGLPGLPGSMGDMVNYDDIKRFIRQEIIKLFDERMAYYTSRMQFPMEVAAAPGRPGPPGKDGAPGRPGAPGSPGLPGQIGREGRQGLPGMRGLPGTKGEKGDIGVGIAGENGLPGPPGPQGPPGYGKMGATGPMGQQGIPGIPGPPGPMGQPGKAGHCNPSDCFGAMPMEQQYPPMKSMKGPFG.

The first 21 residues, 1 to 21, serve as a signal peptide directing secretion; the sequence is MLTSWAPGLWVLGLWATFSHG. N-linked (GlcNAc...) asparagine glycosylation is present at N47. The 182-residue stretch at 50 to 231 folds into the Laminin G-like domain; that stretch reads GFNLIRRLNL…LQQAHIYCDP (182 aa). Residues 232–374 form a nonhelical region 10 (NC10) region; the sequence is ELVLEEGCCE…SPDAPLQCVE (143 aa). The interval 324–547 is disordered; sequence RESNVTLGPS…DPAPAWEGLG (224 aa). N-linked (GlcNAc...) asparagine glycosylation occurs at N327. The 50-residue stretch at 375 to 424 folds into the Collagen-like 1 domain; that stretch reads GPKGEKGESGDLGPPGLPGPTGQKGQKGEKGDGGLKGLPGKPGRDGRPGE. The tract at residues 375-509 is triple-helical region 9 (COL9) with 3 imperfections; sequence GPKGEKGESG…PGTKGEKGDP (135 aa). The span at 449–460 shows a compositional bias: pro residues; sequence PGPPGLPGPPGI. Over residues 486–495 the composition is skewed to gly residues; it reads GKEGPGGKPG. Positions 510 to 524 are nonhelical region 9 (NC9); the sequence is CEVCPTLPEGSQNFV. The tract at residues 525–570 is triple-helical region 8 (COL8) with 1 imperfection; the sequence is GLPGKPGPKGEPGDPAPAWEGLGTVGLKGDRGDPGIQGMKGEKGEP. The Cell attachment site signature appears at 555–557; that stretch reads RGD. Positions 571–586 are nonhelical region 8 (NC8); the sequence is CSSCSSGVGAQHLGPS. Over residues 585 to 598 the composition is skewed to low complexity; sequence PSPGHGLPGLPGTS. The tract at residues 585–935 is disordered; sequence PSPGHGLPGL…LPGQPGLTAE (351 aa). The triple-helical region 7 (COL7) with 1 imperfection stretch occupies residues 587–640; the sequence is PGHGLPGLPGTSGIPGPRGLKGEKGSFGDTGPAGVPGSPGPVGPAGIKGAKGEP. Collagen-like domains lie at 590-643 and 676-725; these read GLPG…PCEP and GLPG…PAGP. Positions 641–661 are nonhelical region 7 (NC7); the sequence is CEPCTALSELQDGDMRVVHLP. The segment at 662–732 is triple-helical region 6 (COL6) with 1 imperfection; that stretch reads GPAGEKGEPG…AGPKGEKGDG (71 aa). The segment covering 683 to 693 has biased composition (basic and acidic residues); the sequence is KAGERGLKGQK. A compositionally biased stretch (low complexity) spans 698-714; it reads NPGDPGTPGITGQPGIS. The segment at 733–747 is nonhelical region 6 (NC6); it reads CTACPSLQGALTDVS. The segment at 748–870 is triple-helical region 5 (COL5) with 3 imperfections; sequence GLPGKPGPKG…RGEKGEPGEC (123 aa). The Collagen-like 4 domain maps to 797 to 848; that stretch reads GAEGPQGEPGTQGLPGTQGLPGPRGPPGSAGEKGAQGSPGPKGAIGPMGPPG. Positions 801–817 are enriched in low complexity; that stretch reads PQGEPGTQGLPGTQGLP. Residues 871-881 are nonhelical region 5 (NC5); the sequence is SCPSRGEPIFS. Residues 882-933 form a triple-helical region 4 (COL4) with 2 imperfections region; it reads GMPGAPGLWMGSSSQPGPQGPPGVPGPPGPPGMPGLQGVPGHNGLPGQPGLT. The segment covering 899–914 has biased composition (pro residues); the sequence is PQGPPGVPGPPGPPGM. The tract at residues 934 to 967 is nonhelical region 4 (NC4); that stretch reads AELGSLPIEKHLLKSICGDCAQGQTAHPAFLLEK. Positions 968–982 are triple-helical region 3 (COL3); that stretch reads GEKGDQGIPGVPGFD. A nonhelical region 3 (NC3) region spans residues 983 to 1005; that stretch reads NCARCFIERERPRAEEARGDNSE. Disordered stretches follow at residues 995-1405 and 1445-1523; these read RAEE…LPGS and AAAP…GYGK. The Cell attachment site motif lies at 1000 to 1002; it reads RGD. Residues 1006 to 1063 form the Collagen-like 5 domain; sequence GEPGCSGSPGLPGPPGMPGQRGEEGPPGMRGSPGPPGPIGLQGERGLTGLTGDKGEPG. Residues 1006 to 1409 are triple-helical region 2 (COL2) with 2 imperfections; it reads GEPGCSGSPG…PGLPGSMGDM (404 aa). Residues 1098–1107 show a composition bias toward low complexity; it reads SGPPGSEGLP. 2 stretches are compositionally biased toward pro residues: residues 1139–1148 and 1178–1187; these read FPGPPGPPGF and SPGPPGPPGI. Residues 1196–1205 show a composition bias toward basic and acidic residues; sequence LDGKDGKPGL. The short motif at 1206–1208 is the Cell attachment site element; the sequence is RGD. The region spanning 1210 to 1263 is the Collagen-like 6 domain; the sequence is GPAGPPGLMGPPGFKGKTGHPGLPGPKGDCGKPGPPGSSGRPGAEGEPGAMGPQ. The segment covering 1247 to 1263 has biased composition (low complexity); the sequence is SSGRPGAEGEPGAMGPQ. The segment covering 1265–1281 has biased composition (pro residues); sequence RPGPPGHLGPPGQPGPP. 3 Collagen-like domains span residues 1350-1407, 1448-1500, and 1504-1552; these read GQKG…GSMG, PGRP…GDIG, and AGEN…GKAG. A compositionally biased stretch (gly residues) spans 1362-1371; that stretch reads GMPGGPGKSG. The span at 1396–1405 shows a compositional bias: low complexity; the sequence is NPGLPGLPGS. The nonhelical region 2 (NC2) stretch occupies residues 1410-1448; it reads VNYDDIKRFIRQEIIKLFDERMAYYTSRMQFPMEVAAAP. The tract at residues 1449 to 1554 is triple-helical region 1 (COL1) with 2 imperfections; it reads GRPGPPGKDG…MGQPGKAGHC (106 aa). Positions 1555–1580 are nonhelical region 1 (NC1); that stretch reads NPSDCFGAMPMEQQYPPMKSMKGPFG.

It belongs to the fibril-associated collagens with interrupted helices (FACIT) family. Homotrimer. Interacts with FBN1, fibronectin and integrins ITGA1/ITGB1 and ITGA2/ITGB1. Integrin ITGA1/ITGB1 binds to a unique site within COL16A1 located close to its C-terminal end between collagenous domains COL1-COL3. Prolines at the third position of the tripeptide repeating unit (G-X-Y) are hydroxylated in some or all of the chains. In terms of processing, glycosylated. In terms of tissue distribution, expressed in most tissues examined with highest levels of expression observed in heart. Strongly expressed in cortical and medullar regions of kidney and more weakly expressed in lung. Also detected in the ciliary muscle of the eye, on the serosa layer lining the muscularis externa of intestinal tissue, and in the perimysium membrane lining both the cardiac muscle bundle and the smooth muscle tissue of the small intestine. Strongly stained in particulate or granular structures. Not detected in brain or skeletal muscle.

The protein localises to the secreted. It is found in the extracellular space. Its subcellular location is the extracellular matrix. Involved in mediating cell attachment and inducing integrin-mediated cellular reactions, such as cell spreading and alterations in cell morphology. The polypeptide is Collagen alpha-1(XVI) chain (Mus musculus (Mouse)).